The primary structure comprises 427 residues: Adenylosuccinate synthetase (427 aa).

GTP-binding positions include 12–18 and 40–42; these read GDEGKGK and GHT. Aspartate 13 functions as the Proton acceptor in the catalytic mechanism. Mg(2+) is bound by residues aspartate 13 and glycine 40. IMP contacts are provided by residues 13–16, 38–41, threonine 126, arginine 140, glutamine 221, threonine 236, and arginine 299; these read DEGK and NAGH. Histidine 41 functions as the Proton donor in the catalytic mechanism. 295–301 provides a ligand contact to substrate; sequence STTKRPR. GTP contacts are provided by residues arginine 301, 327 to 329, and 409 to 411; these read KLD and SVG.

This sequence belongs to the adenylosuccinate synthetase family. As to quaternary structure, homodimer. The cofactor is Mg(2+).

The protein localises to the cytoplasm. It carries out the reaction IMP + L-aspartate + GTP = N(6)-(1,2-dicarboxyethyl)-AMP + GDP + phosphate + 2 H(+). It participates in purine metabolism; AMP biosynthesis via de novo pathway; AMP from IMP: step 1/2. In terms of biological role, plays an important role in the de novo pathway of purine nucleotide biosynthesis. Catalyzes the first committed step in the biosynthesis of AMP from IMP. The protein is Adenylosuccinate synthetase of Borrelia recurrentis (strain A1).